A 314-amino-acid chain; its full sequence is GTP cyclohydrolase FolE2 (314 aa).

Residues 290 to 314 form a disordered region; the sequence is DASAWSAPQASAPDQQESFATGNER. A compositionally biased stretch (low complexity) spans 291–305; it reads ASAWSAPQASAPDQQ.

The protein belongs to the GTP cyclohydrolase IV family.

It catalyses the reaction GTP + H2O = 7,8-dihydroneopterin 3'-triphosphate + formate + H(+). It participates in cofactor biosynthesis; 7,8-dihydroneopterin triphosphate biosynthesis; 7,8-dihydroneopterin triphosphate from GTP: step 1/1. In terms of biological role, converts GTP to 7,8-dihydroneopterin triphosphate. The sequence is that of GTP cyclohydrolase FolE2 from Pseudomonas putida (strain ATCC 700007 / DSM 6899 / JCM 31910 / BCRC 17059 / LMG 24140 / F1).